The chain runs to 289 residues: BTB/POZ domain-containing protein KCTD7 (289 aa).

Polar residues predominate over residues 1 to 10 (MVVVTGQSKG). The interval 1-35 (MVVVTGQSKGSGDPDEAMSSSDAEDDFQEPATPTA) is disordered. A BTB domain is found at 51–149 (EVVPLNVGGM…HLEDVQPLKG (99 aa)).

Its subcellular location is the cell membrane. It is found in the cytoplasm. The protein resides in the cytosol. In terms of biological role, may be involved in the control of excitability of cortical neurons. The sequence is that of BTB/POZ domain-containing protein KCTD7 (KCTD7) from Gallus gallus (Chicken).